Consider the following 273-residue polypeptide: 2,3,4,5-tetrahydropyridine-2,6-dicarboxylate N-succinyltransferase (273 aa).

Substrate is bound by residues Arg104 and Asp141.

It belongs to the transferase hexapeptide repeat family. In terms of assembly, homotrimer.

Its subcellular location is the cytoplasm. The enzyme catalyses (S)-2,3,4,5-tetrahydrodipicolinate + succinyl-CoA + H2O = (S)-2-succinylamino-6-oxoheptanedioate + CoA. The protein operates within amino-acid biosynthesis; L-lysine biosynthesis via DAP pathway; LL-2,6-diaminopimelate from (S)-tetrahydrodipicolinate (succinylase route): step 1/3. In Neisseria meningitidis serogroup B (strain ATCC BAA-335 / MC58), this protein is 2,3,4,5-tetrahydropyridine-2,6-dicarboxylate N-succinyltransferase.